Here is a 149-residue protein sequence, read N- to C-terminus: MRFLAATILLLALVAASQAEPLHFKDCGSKVGVIKEVNVSPCPTDPCQLHKGQSYSVNITFTSGTQSQNSTALVHGILEGIRVPFPIPEPDGCKSGINCPIQKDKVYSYLNKLPVKNEYPSIKLVVEWKLEDDKKNNLFCWEIPVQITS.

The N-terminal stretch at 1-19 is a signal peptide; sequence MRFLAATILLLALVAASQA. 3 cysteine pairs are disulfide-bonded: cysteine 27–cysteine 140, cysteine 42–cysteine 47, and cysteine 93–cysteine 99. N-linked (GlcNAc...) asparagine glycans are attached at residues asparagine 58 and asparagine 69. The residue at position 116 (lysine 116) is an N6-acetyllysine.

This sequence belongs to the NPC2 family. In terms of assembly, interacts with NPC1 (via the second lumenal domain) in a cholestrol-dependent manner. Interacts with NUS1/NgBR, the interaction stabilizes NCP2 and regulates cholesterol trafficking. Interacts with DHDDS. Interacts with NEDD4L (via C2 domain). Interacts with NPC1L1. N-glycosylated. Detected in liver and bile. Detected in epididymis (at protein level). Detected in caput epididymis, corpus epididymis, cauda epididymis and ovary.

The protein resides in the secreted. It is found in the endoplasmic reticulum. The protein localises to the lysosome. The catalysed reaction is cholesterol(in) = cholesterol(out). Intracellular cholesterol transporter which acts in concert with NPC1 and plays an important role in the egress of cholesterol from the lysosomal compartment. Unesterified cholesterol that has been released from LDLs in the lumen of the late endosomes/lysosomes is transferred by NPC2 to the cholesterol-binding pocket in the N-terminal domain of NPC1. May bind and mobilize cholesterol that is associated with membranes. NPC2 binds cholesterol with a 1:1 stoichiometry. Can bind a variety of sterols, including lathosterol, desmosterol and the plant sterols stigmasterol and beta-sitosterol. The secreted form of NCP2 regulates biliary cholesterol secretion via stimulation of ABCG5/ABCG8-mediated cholesterol transport. The sequence is that of NPC intracellular cholesterol transporter 2 from Mus musculus (Mouse).